Here is an 825-residue protein sequence, read N- to C-terminus: Ubiquitin carboxyl-terminal hydrolase 16 (825 aa).

The disordered stretch occupies residues 1 to 20; sequence MGKKRTKGRSAPDTVASESA. A UBP-type zinc finger spans residues 22–141; it reads PVCRHLRKGL…QVVDYVRKQA (120 aa). Positions 24, 26, 48, 51, 73, 76, 81, 89, 93, 102, 115, and 118 each coordinate Zn(2+). K139 participates in a covalent cross-link: Glycyl lysine isopeptide (Lys-Gly) (interchain with G-Cter in SUMO2). Positions 164-180 are enriched in basic and acidic residues; that stretch reads EKESKNEQEREKSENLA. The interval 164–184 is disordered; it reads EKESKNEQEREKSENLAKETI. The residue at position 188 (S188) is a Phosphoserine. Residues 195 to 824 enclose the USP domain; it reads KGLSNLGNTC…QAYLLFYERI (630 aa). The active-site Nucleophile is C204. Residues 393–407 show a composition bias toward basic and acidic residues; the sequence is SGKKSINDKNVKMTM. Positions 393-456 are disordered; it reads SGKKSINDKN…KQAKNQRRQQ (64 aa). Acidic residues predominate over residues 408-419; the sequence is EEEDKDSEEEKD. S414 bears the Phosphoserine mark. Basic residues predominate over residues 436–456; that stretch reads HLQKKAKKQAKKQAKNQRRQQ. 2 positions are modified to phosphoserine: S520 and S531. H759 serves as the catalytic Proton acceptor.

This sequence belongs to the peptidase C19 family. USP16 subfamily. As to quaternary structure, homotetramer. Associates with late pre-40S ribosomes. Interacts with CEP78; promoting deubiquitination of tektins. In terms of processing, phosphorylated at the onset of mitosis and dephosphorylated during the metaphase/anaphase transition. Phosphorylation by AURKB enhances the deubiquitinase activity.

It is found in the nucleus. Its subcellular location is the cytoplasm. It carries out the reaction Thiol-dependent hydrolysis of ester, thioester, amide, peptide and isopeptide bonds formed by the C-terminal Gly of ubiquitin (a 76-residue protein attached to proteins as an intracellular targeting signal).. Its function is as follows. Specifically deubiquitinates 'Lys-120' of histone H2A (H2AK119Ub), a specific tag for epigenetic transcriptional repression, thereby acting as a coactivator. Deubiquitination of histone H2A is a prerequisite for subsequent phosphorylation at 'Ser-11' of histone H3 (H3S10ph), and is required for chromosome segregation when cells enter into mitosis. In resting B- and T-lymphocytes, phosphorylation by AURKB leads to enhance its activity, thereby maintaining transcription in resting lymphocytes. Regulates Hox gene expression via histone H2A deubiquitination. Prefers nucleosomal substrates. Does not deubiquitinate histone H2B. Also deubiquitinates non-histone proteins, such as ribosomal protein RPS27A: deubiquitination of monoubiquitinated RPS27A promotes maturation of the 40S ribosomal subunit. Also mediates deubiquitination of tektin proteins (TEKT1, TEKT2, TEK3, TEKT4 and TEKT5), promoting their stability. This chain is Ubiquitin carboxyl-terminal hydrolase 16 (Usp16), found in Mus musculus (Mouse).